The chain runs to 174 residues: Myeloid-derived growth factor (174 aa).

Positions 1–32 (MAAPSGRRNGSGGANLWVSLLLAAAALRPVET) are cleaved as a signal peptide.

Belongs to the MYDGF family.

It localises to the secreted. Its subcellular location is the endoplasmic reticulum-Golgi intermediate compartment. The protein resides in the endoplasmic reticulum. The protein localises to the golgi apparatus. In terms of biological role, bone marrow-derived monocyte and paracrine-acting protein that promotes cardiac myocyte survival and adaptive angiogenesis for cardiac protection and/or repair after myocardial infarction (MI). Stimulates endothelial cell proliferation through a MAPK1/3-, STAT3- and CCND1-mediated signaling pathway. Inhibits cardiac myocyte apoptosis in a PI3K/AKT-dependent signaling pathway. This chain is Myeloid-derived growth factor, found in Bos taurus (Bovine).